A 577-amino-acid polypeptide reads, in one-letter code: Arginine--tRNA ligase (577 aa).

The 'HIGH' region motif lies at proline 122 to histidine 132.

The protein belongs to the class-I aminoacyl-tRNA synthetase family. Monomer.

The protein resides in the cytoplasm. The enzyme catalyses tRNA(Arg) + L-arginine + ATP = L-arginyl-tRNA(Arg) + AMP + diphosphate. This chain is Arginine--tRNA ligase, found in Salmonella arizonae (strain ATCC BAA-731 / CDC346-86 / RSK2980).